Reading from the N-terminus, the 396-residue chain is Phospholipase A1-II 4 (396 aa).

The active-site Acyl-ester intermediate is Ser-221. Residues Ser-221, Asp-282, and His-319 each act as charge relay system in the active site.

It belongs to the AB hydrolase superfamily. Lipase family.

It is found in the cytoplasm. Its function is as follows. Acylhydrolase that catalyzes the hydrolysis of phospholipids at the sn-1 position. The sequence is that of Phospholipase A1-II 4 from Oryza sativa subsp. japonica (Rice).